Reading from the N-terminus, the 746-residue chain is F-box only protein 30 (746 aa).

The segment at 49 to 110 (EHRLLCPFER…SYSDRKSYES (62 aa)) adopts a TRAF-type zinc-finger fold. Disordered stretches follow at residues 222–241 (MDEE…DQDH) and 247–266 (IGAV…QAEQ). Over residues 225 to 241 (ENNKESFQDKNLKDQDH) the composition is skewed to basic and acidic residues. Residues 256 to 266 (SGTSQNAQAEQ) show a composition bias toward polar residues. S383 carries the post-translational modification Phosphoserine. Residues 611-659 (SDHLSSLPFEVLQHIAGFLDGFSLCQLACVSRLMRDVCGSLLQSRGMVI) form the F-box domain.

In terms of assembly, part of a SCF (SKP1-cullin-F-box) protein ligase complex. Interacts with SKP1, CUL1 and RBX1/ROC1. In terms of processing, auto-ubiquitinated. May be neddylated. Neddylation may be required for E3 ligase activity, since it was observed only after purification with o-phenanthroline.

The protein operates within protein modification; protein ubiquitination. Functionally, substrate-recognition component of the SCF (SKP1-CUL1-F-box protein)-type E3 ubiquitin ligase complex. Required for muscle atrophy following denervation. The chain is F-box only protein 30 (Fbxo30) from Mus musculus (Mouse).